The chain runs to 968 residues: AP2-associated protein kinase 1 (968 aa).

M1 carries the post-translational modification N-acetylmethionine. Positions 1–11 are enriched in basic and acidic residues; the sequence is MKKFFDSRREQ. The disordered stretch occupies residues 1-25; that stretch reads MKKFFDSRREQGGSGLGSGSSGGGG. Over residues 12–25 the composition is skewed to gly residues; sequence GGSGLGSGSSGGGG. S14 carries the phosphoserine modification. Residues 46–315 form the Protein kinase domain; that stretch reads VTVDEVLAEG…QVSFFSFKLL (270 aa). Residues 52–60 and K74 each bind ATP; that span reads LAEGGFAIV. The active-site Proton acceptor is D176. Position 234 is a phosphotyrosine (Y234). S235 is subject to Phosphoserine. 2 disordered regions span residues 327–485 and 578–640; these read SPIP…AQAP and IQPP…AGHR. T354 and T389 each carry phosphothreonine. R391 bears the Omega-N-methylarginine mark. Over residues 437–448 the composition is skewed to pro residues; it reads QAPPAPQQPPSA. 2 stretches are compositionally biased toward low complexity: residues 449–472 and 578–589; these read PAQG…LKQQ and IQPPQAQPATAS. T613 is modified (phosphothreonine). A Phosphoserine modification is found at S625. T627 bears the Phosphothreonine mark. 4 positions are modified to phosphoserine: S630, S631, S644, and S657. T660 is subject to Phosphothreonine. Residues 671 to 708 form a disordered region; that stretch reads SLNKSKSATTTPSGSPRASQQNVYNPSEGSTWNPFDDD. The span at 679–703 shows a compositional bias: polar residues; it reads TTTPSGSPRASQQNVYNPSEGSTWN. Y694 is subject to Phosphotyrosine. Residues S738, S853, S944, and S945 each carry the phosphoserine modification. Residues 830–967 form a clathrin-binding domain (CBD) region; the sequence is EKADVAVESL…SLLLVDQLID (138 aa). Disordered regions lie at residues 843–862 and 929–952; these read LEPP…ASNR and PVLI…ESSL. A compositionally biased stretch (polar residues) spans 851–862; the sequence is LPSQTESVASNR. Positions 938–951 are enriched in low complexity; it reads GGHSRNSSGSSESS.

It belongs to the protein kinase superfamily. Ser/Thr protein kinase family. In terms of assembly, interacts (via CBD domain) with clathrin. Interacts with AP-2 complex. Interacts with NUMB. Interacts with alpha-adaptin. Interacts with EPS15. Interacts with membrane-bound activated NOTCH1 but not with the inactive full-length form of NOTCH1. Preferentially interacts with monoubiquitinated activated NOTCH1 compared to the non-ubiquitinated form. In terms of processing, autophosphorylated.

The protein localises to the cell membrane. It localises to the membrane. It is found in the clathrin-coated pit. The protein resides in the presynapse. The enzyme catalyses L-seryl-[protein] + ATP = O-phospho-L-seryl-[protein] + ADP + H(+). It carries out the reaction L-threonyl-[protein] + ATP = O-phospho-L-threonyl-[protein] + ADP + H(+). With respect to regulation, stimulated by clathrin. Functionally, regulates clathrin-mediated endocytosis by phosphorylating the AP2M1/mu2 subunit of the adaptor protein complex 2 (AP-2) which ensures high affinity binding of AP-2 to cargo membrane proteins during the initial stages of endocytosis. Preferentially, may phosphorylate substrates on threonine residues. Regulates phosphorylation of other AP-2 subunits as well as AP-2 localization and AP-2-mediated internalization of ligand complexes. Phosphorylates NUMB and regulates its cellular localization, promoting NUMB localization to endosomes. Binds to and stabilizes the activated form of NOTCH1, increases its localization in endosomes and regulates its transcriptional activity. This Sus scrofa (Pig) protein is AP2-associated protein kinase 1 (AAK1).